We begin with the raw amino-acid sequence, 245 residues long: Probable transcriptional regulatory protein pc1328 (245 aa).

Belongs to the TACO1 family.

The protein localises to the cytoplasm. In Protochlamydia amoebophila (strain UWE25), this protein is Probable transcriptional regulatory protein pc1328.